We begin with the raw amino-acid sequence, 352 residues long: MPAQKRMSRYAYLVNKVAGPTLCGVFYGKYVEASDQAVSTCMAWFKIVVITKRVSAREWQEKGATVVTFRDLTRGTAPKAVECDLLYVRDFNPNTSQCWLPMLEGYKRTRTWVQIGHCNFESYGPHVMKKQLFGDFSYVPFVGYGSDVLALPETDEILEYDTSPFERFVHAVQRLNPKGESVWTHLGPDVAFAEMSIDAFNAVRESSPSPMSACMMDKTAVPQSLSEMVADYDWDHNEALRETPYVSSACAAMSRLTSSDPSLVVAVHEPKLQKYLEQFTGAKVVTYGKMLDSRMVPKRVVIFQAHPINGCKSGRKLMHMWRSMPGKPKITVIKPRQEWSAYYCNPLKRVGL.

This is an uncharacterized protein from Frog virus 3 (isolate Goorha) (FV-3).